Reading from the N-terminus, the 121-residue chain is UPF0145 protein SGR_4080 (121 aa).

This sequence belongs to the UPF0145 family.

In Streptomyces griseus subsp. griseus (strain JCM 4626 / CBS 651.72 / NBRC 13350 / KCC S-0626 / ISP 5235), this protein is UPF0145 protein SGR_4080.